A 948-amino-acid polypeptide reads, in one-letter code: Protocadherin alpha-2 (948 aa).

An N-terminal signal peptide occupies residues 1–22 (MASSIRRGRGAWTRLLSLLLLA). Residues 23–697 (AWEVGSGQLR…GSEATLVDVN (675 aa)) are Extracellular-facing. Cadherin domains are found at residues 30–133 (QLRY…PPIF), 157–242 (ASDA…EPTF), 243–350 (AQSV…TPEV), 351–455 (SITS…APAF), 456–565 (AQPE…APAL), and 588–678 (GHVV…APKA). N-linked (GlcNAc...) asparagine glycans are attached at residues Asn257, Asn265, Asn362, and Asn548. The chain crosses the membrane as a helical span at residues 698–718 (VYLIIAICAVSSLLVLTVLLY). The Cytoplasmic portion of the chain corresponds to 719 to 948 (TALRCSVPPT…GNSTTDNSDQ (230 aa)). The PXXP 1 repeat unit spans residues 734-737 (PGKP). The interval 734–892 (PGKPTLVCSS…PDKFIIPGSP (159 aa)) is 5 X 4 AA repeats of P-X-X-P. Disordered stretches follow at residues 754–801 (RRQR…RQPN), 829–854 (GPGG…EVSP), and 868–948 (KYGP…NSDQ). The span at 783 to 795 (AEEKQLSESEYVG) shows a compositional bias: basic and acidic residues. PXXP repeat units follow at residues 797-800 (PRQP), 830-833 (PGGP), 871-874 (PGNP), and 889-892 (PGSP). The span at 907-921 (DKSDFITFGKKEETK) shows a compositional bias: basic and acidic residues.

The protein resides in the cell membrane. Its function is as follows. Potential calcium-dependent cell-adhesion protein. May be involved in the establishment and maintenance of specific neuronal connections in the brain. The sequence is that of Protocadherin alpha-2 (PCDHA2) from Homo sapiens (Human).